Here is a 284-residue protein sequence, read N- to C-terminus: L-ribulose-5-phosphate 3-epimerase UlaE (284 aa).

This sequence belongs to the L-ribulose-5-phosphate 3-epimerase family.

The enzyme catalyses L-ribulose 5-phosphate = L-xylulose 5-phosphate. It functions in the pathway cofactor degradation; L-ascorbate degradation; D-xylulose 5-phosphate from L-ascorbate: step 3/4. Catalyzes the isomerization of L-xylulose-5-phosphate to L-ribulose-5-phosphate. Is involved in the anaerobic L-ascorbate utilization. This Salmonella choleraesuis (strain SC-B67) protein is L-ribulose-5-phosphate 3-epimerase UlaE.